A 416-amino-acid polypeptide reads, in one-letter code: D-amino acid dehydrogenase 2 (416 aa).

3-17 (ITVLGAGVVGTAAAY) contributes to the FAD binding site.

This sequence belongs to the DadA oxidoreductase family. The cofactor is FAD.

The catalysed reaction is a D-alpha-amino acid + A + H2O = a 2-oxocarboxylate + AH2 + NH4(+). Its function is as follows. Oxidative deamination of D-amino acids. The polypeptide is D-amino acid dehydrogenase 2 (dadA2) (Mesorhizobium japonicum (strain LMG 29417 / CECT 9101 / MAFF 303099) (Mesorhizobium loti (strain MAFF 303099))).